The sequence spans 637 residues: Transcription termination factor FttA (637 aa).

The segment at 4-71 (EDVLLDLKHK…IAMRPDPRVL (68 aa)) is KHa. Positions 72 to 139 (ATPEDSISII…WIPKVVRTPP (68 aa)) are KHb. The interval 180 to 383 (WVRVTALGGC…VISEATYGNA (204 aa)) is metallo-beta-lactamase N-terminus. Zn(2+) contacts are provided by H242, H244, D246, H247, H329, and D352. A beta-Casp region spans residues 384–578 (NAFQPALKDA…MEVQVVDGFS (195 aa)). Residues 579 to 637 (GHSDRRQLMEYVKRMQPRPERVFTEHGDEKACVDLASSVYKKLKIETRALTNLETVRLL) are metallo-beta-lactamase C-terminus. A Zn(2+)-binding site is contributed by H604.

It belongs to the metallo-beta-lactamase superfamily. RNA-metabolizing metallo-beta-lactamase-like family. FttA subfamily. Homodimer. Interacts with RNA polymerase (RNAP), interacts with the Spt4-Spt5 complex. Zn(2+) serves as cofactor.

Functionally, terminates transcription on the whole genome. Termination is linked to FttA-mediated RNA cleavage and does not require NTP hydrolysis. Cleaves endonucleolytically at the RNA exit channel of RNA polymerase (RNAP); the 5'-3' exonuclease activity of this protein degrades the nascent RNA released from RNAP. This is Transcription termination factor FttA from Methanosarcina mazei (strain ATCC BAA-159 / DSM 3647 / Goe1 / Go1 / JCM 11833 / OCM 88) (Methanosarcina frisia).